A 401-amino-acid chain; its full sequence is Probable acid ceramidase (401 aa).

A signal peptide spans 1–22; sequence MKPVAISLSLLLLVTLLPGSEQ. Residues asparagine 101, asparagine 303, and asparagine 371 are each glycosylated (N-linked (GlcNAc...) asparagine).

The protein belongs to the acid ceramidase family.

It carries out the reaction an N-acyl-sphingoid base + H2O = a sphingoid base + a fatty acid. The enzyme catalyses an N-acylsphing-4-enine + H2O = sphing-4-enine + a fatty acid. The catalysed reaction is an N-acyl-15-methylhexadecasphing-4-enine + H2O = 15-methylhexadecasphing-4-enine + a fatty acid. Its function is as follows. Catalyzes the hydrolysis of ceramides into sphingoid base and free fatty acid. C.elegans contain specific sphingoid bases, which are unique or different in structure compared to the sphingoid bases found in other animals. Two examples of these distinctive compounds are: 15-methylhexadecasphinganine and 15-methylhexadecasphing-4-enine. The polypeptide is Probable acid ceramidase (Caenorhabditis elegans).